The chain runs to 100 residues: Large ribosomal subunit protein uL23 (100 aa).

This sequence belongs to the universal ribosomal protein uL23 family. As to quaternary structure, part of the 50S ribosomal subunit. Contacts protein L29, and trigger factor when it is bound to the ribosome.

In terms of biological role, one of the early assembly proteins it binds 23S rRNA. One of the proteins that surrounds the polypeptide exit tunnel on the outside of the ribosome. Forms the main docking site for trigger factor binding to the ribosome. The sequence is that of Large ribosomal subunit protein uL23 from Kosmotoga olearia (strain ATCC BAA-1733 / DSM 21960 / TBF 19.5.1).